The sequence spans 90 residues: Repetitive proline-rich cell wall protein 3 (90 aa).

Residues M1–T24 form the signal peptide. Positions K46–K65 are enriched in pro residues. The segment at K46–A90 is disordered.

It belongs to the plant proline-rich protein superfamily. ENOD12 family.

The protein localises to the secreted. The protein resides in the cell wall. This Glycine max (Soybean) protein is Repetitive proline-rich cell wall protein 3 (PRP3).